The following is a 347-amino-acid chain: tRNA N6-adenosine threonylcarbamoyltransferase (347 aa).

Fe cation contacts are provided by H117 and H121. Residues 140–144 (LVSGG), D173, G186, and N280 each bind substrate. D308 contacts Fe cation.

Belongs to the KAE1 / TsaD family. The cofactor is Fe(2+).

The protein localises to the cytoplasm. It catalyses the reaction L-threonylcarbamoyladenylate + adenosine(37) in tRNA = N(6)-L-threonylcarbamoyladenosine(37) in tRNA + AMP + H(+). Its function is as follows. Required for the formation of a threonylcarbamoyl group on adenosine at position 37 (t(6)A37) in tRNAs that read codons beginning with adenine. Is involved in the transfer of the threonylcarbamoyl moiety of threonylcarbamoyl-AMP (TC-AMP) to the N6 group of A37, together with TsaE and TsaB. TsaD likely plays a direct catalytic role in this reaction. This chain is tRNA N6-adenosine threonylcarbamoyltransferase, found in Psychrobacter sp. (strain PRwf-1).